The sequence spans 704 residues: SH3KBP1-binding protein 1 (704 aa).

Alanine 2 carries the N-acetylalanine modification. One can recognise a BTB domain in the interval 19-88 (EVIHLNVGGK…LRTKELDPRG (70 aa)). The tract at residues 146 to 165 (VGPQQIGGRPAPVRRSNTMP) is disordered. The residue at position 163 (threonine 163) is a Phosphothreonine. 5 WD repeats span residues 233–280 (RLDW…GGSE), 283–322 (VFHL…WQVQ), 324–359 (VQPI…LRMK), 428–466 (VHRS…GMIS), and 548–586 (LECE…DGLG). Residues 609–704 (PLTSSRASFP…PKNTLNETSF (96 aa)) form a disordered region. Positions 611–631 (TSSRASFPSPSPRTSLTSLHS) are enriched in low complexity. Positions 618–623 (PSPSPR) match the PXXXPR motif. Phosphoserine occurs at positions 644 and 646. The PXXXPR signature appears at 678–683 (PTPAPR).

This sequence belongs to the KCTD3 family. In terms of assembly, monomer. Interacts with CUL3; interaction is direct and forms a 5:5 heterodecamer. Interacts (via PXXXPR motifs) with SH3KBP1 (via SH3 domains). Directly interacts with cathepsin B/CTSB.

It localises to the lysosome. Functionally, inhibits CBL-SH3KBP1 complex mediated down-regulation of EGFR signaling by sequestration of SH3KBP1. Binds to SH3KBP1 and prevents its interaction with CBL and inhibits translocation of SH3KBP1 to EGFR containing vesicles upon EGF stimulation. This Rattus norvegicus (Rat) protein is SH3KBP1-binding protein 1 (Shkbp1).